Here is a 37-residue protein sequence, read N- to C-terminus: Large ribosomal subunit protein bL36 (37 aa).

The protein belongs to the bacterial ribosomal protein bL36 family.

The protein is Large ribosomal subunit protein bL36 of Clostridioides difficile (strain 630) (Peptoclostridium difficile).